Reading from the N-terminus, the 292-residue chain is UTP--glucose-1-phosphate uridylyltransferase (292 aa).

This sequence belongs to the UDPGP type 2 family.

It carries out the reaction alpha-D-glucose 1-phosphate + UTP + H(+) = UDP-alpha-D-glucose + diphosphate. Its function is as follows. May play a role in stationary phase survival. In Mycoplasma genitalium (strain ATCC 33530 / DSM 19775 / NCTC 10195 / G37) (Mycoplasmoides genitalium), this protein is UTP--glucose-1-phosphate uridylyltransferase (galU).